The following is a 406-amino-acid chain: Dual-specificity RNA methyltransferase RlmN (406 aa).

Catalysis depends on E119, which acts as the Proton acceptor. The 246-residue stretch at 125 to 370 (DKGRGTLCVS…AMVRRTRGDD (246 aa)) folds into the Radical SAM core domain. A disulfide bridge links C132 with C375. The [4Fe-4S] cluster site is built by C139, C143, and C146. S-adenosyl-L-methionine-binding positions include 192–193 (GE), S224, 246–248 (SLH), and N332. C375 functions as the S-methylcysteine intermediate in the catalytic mechanism.

Belongs to the radical SAM superfamily. RlmN family. [4Fe-4S] cluster serves as cofactor.

The protein resides in the cytoplasm. The catalysed reaction is adenosine(2503) in 23S rRNA + 2 reduced [2Fe-2S]-[ferredoxin] + 2 S-adenosyl-L-methionine = 2-methyladenosine(2503) in 23S rRNA + 5'-deoxyadenosine + L-methionine + 2 oxidized [2Fe-2S]-[ferredoxin] + S-adenosyl-L-homocysteine. It carries out the reaction adenosine(37) in tRNA + 2 reduced [2Fe-2S]-[ferredoxin] + 2 S-adenosyl-L-methionine = 2-methyladenosine(37) in tRNA + 5'-deoxyadenosine + L-methionine + 2 oxidized [2Fe-2S]-[ferredoxin] + S-adenosyl-L-homocysteine. Its function is as follows. Specifically methylates position 2 of adenine 2503 in 23S rRNA and position 2 of adenine 37 in tRNAs. m2A2503 modification seems to play a crucial role in the proofreading step occurring at the peptidyl transferase center and thus would serve to optimize ribosomal fidelity. This chain is Dual-specificity RNA methyltransferase RlmN, found in Xylella fastidiosa (strain Temecula1 / ATCC 700964).